The chain runs to 230 residues: Ribose-5-phosphate isomerase A (230 aa).

Substrate is bound by residues 28-31, 83-86, and 97-100; these read TGST, DGAD, and KGLG. E106 functions as the Proton acceptor in the catalytic mechanism. K124 provides a ligand contact to substrate.

It belongs to the ribose 5-phosphate isomerase family. In terms of assembly, homodimer.

It catalyses the reaction aldehydo-D-ribose 5-phosphate = D-ribulose 5-phosphate. Its pathway is carbohydrate degradation; pentose phosphate pathway; D-ribose 5-phosphate from D-ribulose 5-phosphate (non-oxidative stage): step 1/1. Its function is as follows. Catalyzes the reversible conversion of ribose-5-phosphate to ribulose 5-phosphate. This is Ribose-5-phosphate isomerase A from Gloeobacter violaceus (strain ATCC 29082 / PCC 7421).